The sequence spans 136 residues: Nucleoside diphosphate kinase (136 aa).

Positions 10, 58, 86, 92, 104, and 114 each coordinate ATP. The active-site Pros-phosphohistidine intermediate is the H117.

Belongs to the NDK family. As to quaternary structure, homotetramer. Mg(2+) is required as a cofactor.

It is found in the cytoplasm. The catalysed reaction is a 2'-deoxyribonucleoside 5'-diphosphate + ATP = a 2'-deoxyribonucleoside 5'-triphosphate + ADP. The enzyme catalyses a ribonucleoside 5'-diphosphate + ATP = a ribonucleoside 5'-triphosphate + ADP. Its function is as follows. Major role in the synthesis of nucleoside triphosphates other than ATP. The ATP gamma phosphate is transferred to the NDP beta phosphate via a ping-pong mechanism, using a phosphorylated active-site intermediate. The chain is Nucleoside diphosphate kinase from Mycolicibacterium vanbaalenii (strain DSM 7251 / JCM 13017 / BCRC 16820 / KCTC 9966 / NRRL B-24157 / PYR-1) (Mycobacterium vanbaalenii).